The chain runs to 309 residues: Probable 3-hydroxyacyl-CoA dehydrogenase B0272.3 (309 aa).

This sequence belongs to the 3-hydroxyacyl-CoA dehydrogenase family. In terms of assembly, homodimer.

It is found in the mitochondrion matrix. The enzyme catalyses a (3S)-3-hydroxyacyl-CoA + NAD(+) = a 3-oxoacyl-CoA + NADH + H(+). Its pathway is lipid metabolism; fatty acid beta-oxidation. The protein is Probable 3-hydroxyacyl-CoA dehydrogenase B0272.3 of Caenorhabditis elegans.